Reading from the N-terminus, the 125-residue chain is Synaptobrevin (125 aa).

The segment at 1-46 is disordered; the sequence is MSGPQNPQAGPGGPPSGPPQPGGPPGPPQGPPQPVQQSKRLQQTQA. The Cytoplasmic portion of the chain corresponds to 1–103; that stretch reads MSGPQNPQAG…KRKFWWKNCK (103 aa). Residues 12 to 34 are compositionally biased toward pro residues; sequence GGPPSGPPQPGGPPGPPQGPPQP. In terms of domain architecture, v-SNARE coiled-coil homology spans 40–100; it reads RLQQTQAQVE…GKLKRKFWWK (61 aa). A helical; Anchor for type IV membrane protein transmembrane segment spans residues 104-123; that stretch reads MMIILGGIVAVIVTVIIVWA. Over 124-125 the chain is Vesicular; sequence AT.

This sequence belongs to the synaptobrevin family.

It is found in the cytoplasmic vesicle. Its subcellular location is the secretory vesicle. The protein localises to the synaptic vesicle membrane. It localises to the synapse. The protein resides in the synaptosome. Its function is as follows. Intrinsic membrane protein of small synaptic vesicles. This chain is Synaptobrevin, found in Doryteuthis pealeii (Longfin inshore squid).